Consider the following 153-residue polypeptide: MATLEQKLEELVSDTIESMGFELVGIECQRAGRFLTVRLYIDKEGGVTIDDCSDVSRQVSAILDVEDPIADKYNLEVSSPGLDRPLFTLAHYQRFIGQEIVIHLRIPMFDRRKWQGKLESVEGDLITLTVDNETRQFAFGNIQKANLVPVFNF.

The protein belongs to the RimP family.

It localises to the cytoplasm. Functionally, required for maturation of 30S ribosomal subunits. This is Ribosome maturation factor RimP from Actinobacillus pleuropneumoniae serotype 5b (strain L20).